A 315-amino-acid chain; its full sequence is Heterodimeric geranylgeranyl pyrophosphate synthase small subunit 1, chloroplastic (315 aa).

2 residues coordinate Mg(2+): Asp-124 and Gly-130. Dimethylallyl diphosphate is bound by residues Lys-228, Gln-265, and Lys-280.

It belongs to the FPP/GGPP synthase family. In terms of assembly, part of a heterodimeric geranyl(geranyl)diphosphate synthase. Mg(2+) serves as cofactor. As to expression, mainly expressed in trichomes, and, to a lower extent, in roots, leaves, flowers and stems.

It localises to the plastid. It is found in the chloroplast thylakoid membrane. Its subcellular location is the chloroplast. In terms of biological role, heterodimeric geranyl(geranyl)-diphosphate (GPP) synthase small subunit. The small subunit alone is inactive in vitro while the large subunit GGPPS1 catalyzes mainly the production of geranygeranyl-diphosphate in vitro. Upon association of the two subunits, the product profile changes and the production of gerany-diphosphate is strongly increased. This chain is Heterodimeric geranylgeranyl pyrophosphate synthase small subunit 1, chloroplastic, found in Cannabis sativa (Hemp).